Reading from the N-terminus, the 387-residue chain is Deoxyguanosinetriphosphate triphosphohydrolase-like protein (387 aa).

The disordered stretch occupies residues 1–26 (MTAPYASDPQRARGRRVKEEESTFRS). Positions 17–26 (VKEEESTFRS) are enriched in basic and acidic residues. Positions 62 to 198 (RLTHSIEVAQ…AAIADDVAYN (137 aa)) constitute an HD domain.

The protein belongs to the dGTPase family. Type 2 subfamily.

This chain is Deoxyguanosinetriphosphate triphosphohydrolase-like protein, found in Roseobacter denitrificans (strain ATCC 33942 / OCh 114) (Erythrobacter sp. (strain OCh 114)).